We begin with the raw amino-acid sequence, 338 residues long: Ketol-acid reductoisomerase (NADP(+)) (338 aa).

Residues 1–181 (MKVYYDKDAD…GGTKGGVIET (181 aa)) enclose the KARI N-terminal Rossmann domain. Residues 24–27 (YGSQ), Arg-47, and Ser-52 contribute to the NADP(+) site. The active site involves His-107. Residue Gly-133 participates in NADP(+) binding. One can recognise a KARI C-terminal knotted domain in the interval 182–327 (NFREETETDL…GQLRDMMPWI (146 aa)). Mg(2+) contacts are provided by Asp-190, Glu-194, Glu-226, and Glu-230. Ser-251 serves as a coordination point for substrate.

It belongs to the ketol-acid reductoisomerase family. It depends on Mg(2+) as a cofactor.

The enzyme catalyses (2R)-2,3-dihydroxy-3-methylbutanoate + NADP(+) = (2S)-2-acetolactate + NADPH + H(+). It carries out the reaction (2R,3R)-2,3-dihydroxy-3-methylpentanoate + NADP(+) = (S)-2-ethyl-2-hydroxy-3-oxobutanoate + NADPH + H(+). It functions in the pathway amino-acid biosynthesis; L-isoleucine biosynthesis; L-isoleucine from 2-oxobutanoate: step 2/4. Its pathway is amino-acid biosynthesis; L-valine biosynthesis; L-valine from pyruvate: step 2/4. In terms of biological role, involved in the biosynthesis of branched-chain amino acids (BCAA). Catalyzes an alkyl-migration followed by a ketol-acid reduction of (S)-2-acetolactate (S2AL) to yield (R)-2,3-dihydroxy-isovalerate. In the isomerase reaction, S2AL is rearranged via a Mg-dependent methyl migration to produce 3-hydroxy-3-methyl-2-ketobutyrate (HMKB). In the reductase reaction, this 2-ketoacid undergoes a metal-dependent reduction by NADPH to yield (R)-2,3-dihydroxy-isovalerate. This chain is Ketol-acid reductoisomerase (NADP(+)), found in Aromatoleum aromaticum (strain DSM 19018 / LMG 30748 / EbN1) (Azoarcus sp. (strain EbN1)).